A 492-amino-acid polypeptide reads, in one-letter code: Glycylpeptide N-tetradecanoyltransferase (492 aa).

Basic and acidic residues predominate over residues 1–22 (MSDSKDRKGKAPEGQSSEKKDG). The interval 1-45 (MSDSKDRKGKAPEGQSSEKKDGAVNITPQMAESLLENNPALRNET) is disordered. Residues 82–85 (YKFW), 215–217 (LCI), and 223–227 (SKRLT) contribute to the tetradecanoyl-CoA site. Residue Leu-492 is the Proton acceptor; via carboxylate of the active site.

This sequence belongs to the NMT family. Monomer.

It localises to the cytoplasm. It catalyses the reaction N-terminal glycyl-[protein] + tetradecanoyl-CoA = N-tetradecanoylglycyl-[protein] + CoA + H(+). Adds a myristoyl group to the N-terminal glycine residue of certain cellular proteins. The chain is Glycylpeptide N-tetradecanoyltransferase (nmt1) from Aspergillus fumigatus (strain ATCC MYA-4609 / CBS 101355 / FGSC A1100 / Af293) (Neosartorya fumigata).